We begin with the raw amino-acid sequence, 162 residues long: G/U mismatch-specific DNA glycosylase (162 aa).

Belongs to the uracil-DNA glycosylase (UDG) superfamily. TDG/mug family. As to quaternary structure, binds DNA as a monomer.

The protein resides in the cytoplasm. It carries out the reaction Specifically hydrolyzes mismatched double-stranded DNA and polynucleotides, releasing free uracil.. Functionally, excises ethenocytosine and uracil, which can arise by alkylation or deamination of cytosine, respectively, from the corresponding mispairs with guanine in ds-DNA. It is capable of hydrolyzing the carbon-nitrogen bond between the sugar-phosphate backbone of the DNA and the mispaired base. The complementary strand guanine functions in substrate recognition. Required for DNA damage lesion repair in stationary-phase cells. The polypeptide is G/U mismatch-specific DNA glycosylase (Serratia marcescens).